The sequence spans 430 residues: Dihydroorotase (430 aa).

2 residues coordinate Zn(2+): His-61 and His-63. Residues 63–65 (HLR) and Asn-95 contribute to the substrate site. Residues Asp-153, His-180, and His-233 each coordinate Zn(2+). Asn-279 provides a ligand contact to substrate. Asp-306 is a binding site for Zn(2+). Asp-306 is a catalytic residue. A substrate-binding site is contributed by His-310.

The protein belongs to the metallo-dependent hydrolases superfamily. DHOase family. Class I DHOase subfamily. Zn(2+) is required as a cofactor.

The catalysed reaction is (S)-dihydroorotate + H2O = N-carbamoyl-L-aspartate + H(+). Its pathway is pyrimidine metabolism; UMP biosynthesis via de novo pathway; (S)-dihydroorotate from bicarbonate: step 3/3. Functionally, catalyzes the reversible cyclization of carbamoyl aspartate to dihydroorotate. The protein is Dihydroorotase of Caldicellulosiruptor saccharolyticus (strain ATCC 43494 / DSM 8903 / Tp8T 6331).